The sequence spans 234 residues: GTP cyclohydrolase 1 (234 aa).

Positions 1–26 (MDALIKPLRAGKPDAKPADPKGTEFR) are disordered. A compositionally biased stretch (basic and acidic residues) spans 11 to 26 (GKPDAKPADPKGTEFR). Zn(2+)-binding residues include cysteine 123, histidine 126, and cysteine 194.

The protein belongs to the GTP cyclohydrolase I family. Toroid-shaped homodecamer, composed of two pentamers of five dimers.

The catalysed reaction is GTP + H2O = 7,8-dihydroneopterin 3'-triphosphate + formate + H(+). Its pathway is cofactor biosynthesis; 7,8-dihydroneopterin triphosphate biosynthesis; 7,8-dihydroneopterin triphosphate from GTP: step 1/1. The sequence is that of GTP cyclohydrolase 1 from Rhodopseudomonas palustris (strain BisB18).